Here is a 535-residue protein sequence, read N- to C-terminus: Keratin, type II cytoskeletal 79 (535 aa).

Polar residues-rich tracts occupy residues 1–12 (MRSSVSRQTYST) and 28–38 (QARTSFSSVTV). The segment at 1 to 53 (MRSSVSRQTYSTKGAFSSSSASGGGGSQARTSFSSVTVSRNSGRGGGPRCGPS) is disordered. The segment at 1-141 (MRSSVSRQTY…DPEIQRVRTE (141 aa)) is head. The span at 43 to 53 (GRGGGPRCGPS) shows a compositional bias: gly residues. Residues 142–177 (EREQIKTLNNKFASFIDKVRFLEQQNKVLETKWALL) are coil 1A. An IF rod domain is found at 142–457 (EREQIKTLNN…KLLESEESRM (316 aa)). The tract at residues 178-198 (QEQGQKSGVTRNNLEPLFEHF) is linker 1. The segment at 199–290 (INNLRGKLDN…HLYEEELSQV (92 aa)) is coil 1B. The segment at 291 to 314 (QTHVSDTSVILSMDNNRNLDLDSI) is linker 12. The interval 315–453 (IAEVKAQYEQ…ATYRKLLESE (139 aa)) is coil 2. A tail region spans residues 454 to 535 (ESRMSGECPS…TTVKTSSRRY (82 aa)).

It belongs to the intermediate filament family. As to quaternary structure, heterotetramer of two type I and two type II keratins.

This is Keratin, type II cytoskeletal 79 (KRT79) from Bos taurus (Bovine).